An 887-amino-acid polypeptide reads, in one-letter code: Alanine--tRNA ligase (887 aa).

Positions 564, 568, 676, and 680 each coordinate Zn(2+). The interval 854–873 (GQGGGGRPDMAQSGGPKGNK) is disordered.

It belongs to the class-II aminoacyl-tRNA synthetase family. It depends on Zn(2+) as a cofactor.

It localises to the cytoplasm. It catalyses the reaction tRNA(Ala) + L-alanine + ATP = L-alanyl-tRNA(Ala) + AMP + diphosphate. Its function is as follows. Catalyzes the attachment of alanine to tRNA(Ala) in a two-step reaction: alanine is first activated by ATP to form Ala-AMP and then transferred to the acceptor end of tRNA(Ala). Also edits incorrectly charged Ser-tRNA(Ala) and Gly-tRNA(Ala) via its editing domain. This Bartonella henselae (strain ATCC 49882 / DSM 28221 / CCUG 30454 / Houston 1) (Rochalimaea henselae) protein is Alanine--tRNA ligase.